The sequence spans 292 residues: Ribosomal protein L11 methyltransferase (292 aa).

S-adenosyl-L-methionine contacts are provided by Thr-144, Gly-165, Asp-187, and Asn-229.

Belongs to the methyltransferase superfamily. PrmA family.

The protein localises to the cytoplasm. The enzyme catalyses L-lysyl-[protein] + 3 S-adenosyl-L-methionine = N(6),N(6),N(6)-trimethyl-L-lysyl-[protein] + 3 S-adenosyl-L-homocysteine + 3 H(+). Methylates ribosomal protein L11. The polypeptide is Ribosomal protein L11 methyltransferase (Pseudomonas putida (strain ATCC 47054 / DSM 6125 / CFBP 8728 / NCIMB 11950 / KT2440)).